We begin with the raw amino-acid sequence, 297 residues long: ATP synthase gamma chain (297 aa).

It belongs to the ATPase gamma chain family. In terms of assembly, F-type ATPases have 2 components, CF(1) - the catalytic core - and CF(0) - the membrane proton channel. CF(1) has five subunits: alpha(3), beta(3), gamma(1), delta(1), epsilon(1). CF(0) has three main subunits: a, b and c.

It localises to the cell membrane. Functionally, produces ATP from ADP in the presence of a proton gradient across the membrane. The gamma chain is believed to be important in regulating ATPase activity and the flow of protons through the CF(0) complex. This is ATP synthase gamma chain from Renibacterium salmoninarum (strain ATCC 33209 / DSM 20767 / JCM 11484 / NBRC 15589 / NCIMB 2235).